The following is a 319-amino-acid chain: Super small secreted glycoprotein (319 aa).

The signal sequence occupies residues 1 to 32 (MGGLSLLQLPRDKFRKSSFFVWVIILFQKAFS). Asn40 is a glycosylation site (N-linked (GlcNAc...) asparagine; by host). 2 disulfide bridges follow: Cys108–Cys135 and Cys121–Cys147. Asn204, Asn208, Asn238, Asn257, and Asn268 each carry an N-linked (GlcNAc...) asparagine; by host glycan.

Belongs to the filoviruses glycoprotein family.

The protein localises to the secreted. The protein is Super small secreted glycoprotein (GP) of Sudan ebolavirus (strain Human/Uganda/Gulu/2000) (SEBOV).